Here is a 204-residue protein sequence, read N- to C-terminus: IMPACT family member YigZ (204 aa).

It belongs to the IMPACT family. In terms of assembly, monomer.

The polypeptide is IMPACT family member YigZ (yigZ) (Escherichia coli (strain K12)).